The primary structure comprises 140 residues: ATP synthase epsilon chain (140 aa).

The protein belongs to the ATPase epsilon chain family. In terms of assembly, F-type ATPases have 2 components, CF(1) - the catalytic core - and CF(0) - the membrane proton channel. CF(1) has five subunits: alpha(3), beta(3), gamma(1), delta(1), epsilon(1). CF(0) has three main subunits: a, b and c.

It is found in the cell inner membrane. Produces ATP from ADP in the presence of a proton gradient across the membrane. The polypeptide is ATP synthase epsilon chain (Marinobacter nauticus (strain ATCC 700491 / DSM 11845 / VT8) (Marinobacter aquaeolei)).